The sequence spans 204 residues: High frequency lysogenization protein HflD homolog (204 aa).

This sequence belongs to the HflD family.

It localises to the cytoplasm. The protein localises to the cell inner membrane. The protein is High frequency lysogenization protein HflD homolog of Ruthia magnifica subsp. Calyptogena magnifica.